The chain runs to 247 residues: uncharacterized protein (247 aa).

This is an uncharacterized protein from Schizosaccharomyces pombe (strain 972 / ATCC 24843) (Fission yeast).